A 48-amino-acid chain; its full sequence is MARYRCCRSPSRSRCRRRRRRCRRRRRRCCRRRRRVCCRRYTVRCRRR.

Belongs to the protamine P1 family. As to expression, testis.

It is found in the nucleus. The protein resides in the chromosome. Functionally, protamines substitute for histones in the chromatin of sperm during the haploid phase of spermatogenesis. They compact sperm DNA into a highly condensed, stable and inactive complex. This is Sperm protamine P1 (PRM1) from Monophyllus redmani (Greater Antillean long-tongued bat).